The primary structure comprises 365 residues: Chorismate synthase (365 aa).

NADP(+) is bound at residue R46. Residues 124–126, G284, 299–303, and R326 contribute to the FMN site; these read RAS and KPTPS.

Belongs to the chorismate synthase family. FMNH2 is required as a cofactor.

The enzyme catalyses 5-O-(1-carboxyvinyl)-3-phosphoshikimate = chorismate + phosphate. Its pathway is metabolic intermediate biosynthesis; chorismate biosynthesis; chorismate from D-erythrose 4-phosphate and phosphoenolpyruvate: step 7/7. Functionally, catalyzes the anti-1,4-elimination of the C-3 phosphate and the C-6 proR hydrogen from 5-enolpyruvylshikimate-3-phosphate (EPSP) to yield chorismate, which is the branch point compound that serves as the starting substrate for the three terminal pathways of aromatic amino acid biosynthesis. This reaction introduces a second double bond into the aromatic ring system. This Pyrobaculum islandicum (strain DSM 4184 / JCM 9189 / GEO3) protein is Chorismate synthase.